The following is a 393-amino-acid chain: 8-amino-7-oxononanoate synthase (393 aa).

Residue 107–108 (GF) coordinates pyridoxal 5'-phosphate. A substrate-binding site is contributed by H132. Pyridoxal 5'-phosphate is bound by residues S180, 205–208 (DDAH), and 236–239 (TLSK). K239 carries the post-translational modification N6-(pyridoxal phosphate)lysine. A substrate-binding site is contributed by T353.

This sequence belongs to the class-II pyridoxal-phosphate-dependent aminotransferase family. BioF subfamily. In terms of assembly, homodimer. Pyridoxal 5'-phosphate is required as a cofactor.

It carries out the reaction 6-carboxyhexanoyl-[ACP] + L-alanine + H(+) = (8S)-8-amino-7-oxononanoate + holo-[ACP] + CO2. It functions in the pathway cofactor biosynthesis; biotin biosynthesis. Catalyzes the decarboxylative condensation of pimeloyl-[acyl-carrier protein] and L-alanine to produce 8-amino-7-oxononanoate (AON), [acyl-carrier protein], and carbon dioxide. The chain is 8-amino-7-oxononanoate synthase from Coprothermobacter proteolyticus (strain ATCC 35245 / DSM 5265 / OCM 4 / BT).